Here is a 450-residue protein sequence, read N- to C-terminus: MAQFFKAKPNSSKQLSAKLSLNVDQLDHLGAGIAQYQGKVVFIPGALPDETVTVQLTEQKKNYARAKLIKVDAQSPERVEPECPHYHTCGGCDLQHMSLSGQREHKEAALLDIMAKFAGTEGGALSPALTGEGWHYRRRARLATLFDKNTKHLSLGFRAASSSNVVPISQCQVLAKPLSDLIVPFAKLLNQLSAKASLGHLELIAADNGHFAVLRITKALNDKDLAKLSAFAEQHQIYICLQDNEGQFQGVGVELVLPVYQLLDENAQSDAVSLSFTPGNFVQVNSQINKAMVAQAMDWLAPAPDERILDLFCGMGNFSLPLAKMGADVIGVEGVAEMVSQARVNAKANNLDKLTFYHGDLSADLSLEPWMGKIDKLLLDPARAGAFESLQWLKKMKPRKVLYVSCNPASLARDSAVLLERGYRLQRLGLIDMFPQTHHIEAMALFELTK.

The TRAM domain occupies 12 to 70; that stretch reads SKQLSAKLSLNVDQLDHLGAGIAQYQGKVVFIPGALPDETVTVQLTEQKKNYARAKLIK. Positions 83, 89, 92, and 171 each coordinate [4Fe-4S] cluster. Residues glutamine 283, phenylalanine 312, asparagine 317, glutamate 333, aspartate 360, and aspartate 380 each contribute to the S-adenosyl-L-methionine site. Cysteine 406 acts as the Nucleophile in catalysis.

The protein belongs to the class I-like SAM-binding methyltransferase superfamily. RNA M5U methyltransferase family. RlmD subfamily.

It carries out the reaction uridine(1939) in 23S rRNA + S-adenosyl-L-methionine = 5-methyluridine(1939) in 23S rRNA + S-adenosyl-L-homocysteine + H(+). Its function is as follows. Catalyzes the formation of 5-methyl-uridine at position 1939 (m5U1939) in 23S rRNA. In Shewanella sp. (strain W3-18-1), this protein is 23S rRNA (uracil(1939)-C(5))-methyltransferase RlmD.